Here is a 102-residue protein sequence, read N- to C-terminus: NADH-quinone oxidoreductase subunit K 2 (102 aa).

A run of 3 helical transmembrane segments spans residues 4 to 24 (ITPV…TVGV), 30 to 50 (IVII…NLIA), and 62 to 82 (IFAI…LGIL).

The protein belongs to the complex I subunit 4L family. In terms of assembly, NDH-1 is composed of 14 different subunits. Subunits NuoA, H, J, K, L, M, N constitute the membrane sector of the complex.

The protein resides in the cell inner membrane. It carries out the reaction a quinone + NADH + 5 H(+)(in) = a quinol + NAD(+) + 4 H(+)(out). Its function is as follows. NDH-1 shuttles electrons from NADH, via FMN and iron-sulfur (Fe-S) centers, to quinones in the respiratory chain. The immediate electron acceptor for the enzyme in this species is believed to be ubiquinone. Couples the redox reaction to proton translocation (for every two electrons transferred, four hydrogen ions are translocated across the cytoplasmic membrane), and thus conserves the redox energy in a proton gradient. In Solibacter usitatus (strain Ellin6076), this protein is NADH-quinone oxidoreductase subunit K 2.